The following is a 187-amino-acid chain: Putative manganese efflux pump MntP (187 aa).

A run of 6 helical transmembrane segments spans residues Phe3–Cys23, His35–Tyr55, Phe56–Leu76, Leu107–Leu127, Val129–Ala149, and Leu166–Phe186.

It belongs to the MntP (TC 9.B.29) family.

It localises to the cell inner membrane. Probably functions as a manganese efflux pump. The polypeptide is Putative manganese efflux pump MntP (Campylobacter jejuni subsp. doylei (strain ATCC BAA-1458 / RM4099 / 269.97)).